We begin with the raw amino-acid sequence, 167 residues long: Photosystem II extrinsic protein V (167 aa).

The signal sequence occupies residues 1 to 30; that stretch reads MVFKTLRRTLWLTLAALLAVFQFNLGAAQA. C67, C70, H71, and H122 together coordinate heme c.

Belongs to the cytochrome c family. PsbV subfamily. As to quaternary structure, PSII is composed of 1 copy each of membrane proteins PsbA, PsbB, PsbC, PsbD, PsbE, PsbF, PsbH, PsbI, PsbJ, PsbK, PsbL, PsbM, PsbT, PsbX, PsbY, PsbZ, Psb30/Ycf12, peripheral proteins PsbO, CyanoQ (PsbQ), PsbU, PsbV and a large number of cofactors. It forms dimeric complexes. The cofactor is heme c.

The protein resides in the cellular thylakoid membrane. In terms of biological role, one of the extrinsic, lumenal subunits of photosystem II (PSII). PSII is a light-driven water plastoquinone oxidoreductase, using light energy to abstract electrons from H(2)O, generating a proton gradient subsequently used for ATP formation. The extrinsic proteins stabilize the structure of photosystem II oxygen-evolving complex (OEC), the ion environment of oxygen evolution and protect the OEC against heat-induced inactivation. Low-potential cytochrome c that plays a role in the OEC of PSII. This chain is Photosystem II extrinsic protein V, found in Synechococcus elongatus (strain ATCC 33912 / PCC 7942 / FACHB-805) (Anacystis nidulans R2).